The following is a 96-amino-acid chain: Integration host factor subunit beta (96 aa).

The protein belongs to the bacterial histone-like protein family. As to quaternary structure, heterodimer of an alpha and a beta chain.

Functionally, this protein is one of the two subunits of integration host factor, a specific DNA-binding protein that functions in genetic recombination as well as in transcriptional and translational control. In Dichelobacter nodosus (strain VCS1703A), this protein is Integration host factor subunit beta.